Here is an 85-residue protein sequence, read N- to C-terminus: Protein U62 (85 aa).

This sequence belongs to the herpesviridae UL91 family.

The sequence is that of Protein U62 (U62) from Homo sapiens (Human).